Consider the following 359-residue polypeptide: Peptide chain release factor 1 (359 aa).

Gln-236 is modified (N5-methylglutamine).

The protein belongs to the prokaryotic/mitochondrial release factor family. In terms of processing, methylated by PrmC. Methylation increases the termination efficiency of RF1.

It localises to the cytoplasm. Functionally, peptide chain release factor 1 directs the termination of translation in response to the peptide chain termination codons UAG and UAA. The sequence is that of Peptide chain release factor 1 from Streptococcus agalactiae.